The following is a 120-amino-acid chain: MKILFVLISILYAVYCFSSEEDVDSAYLANELEPVEDINSEQYAALEPKEEQERSCADMGQDCKDDCDCCLNIATCNCRFGRYFCSCTFGDYQTCLRKKGKCKRNRPQSCPRSNLNRKKG.

Residues 1–16 form the signal peptide; the sequence is MKILFVLISILYAVYC. Positions 17–54 are excised as a propeptide; the sequence is FSSEEDVDSAYLANELEPVEDINSEQYAALEPKEEQER. Disulfide bonds link C56-C70, C63-C76, C69-C87, and C78-C85. Residues 56–95 form the Agouti domain; the sequence is CADMGQDCKDDCDCCLNIATCNCRFGRYFCSCTFGDYQTC.

Belongs to the neurotoxin 05 (agouti) family. Contains 6 disulfide bonds. As to expression, expressed by the venom gland.

The protein localises to the secreted. In Lycosa singoriensis (Wolf spider), this protein is U13-lycotoxin-Ls1d.